The following is a 269-amino-acid chain: MPELPEVETSRRGIAPFLQGKTLSHLTVRQPRLRWPVSETLLTLRDRPILSVQRRAKYLLLELPEGWIVIHLGMSGSVRILPALTPPQKHDHIDLLLTDGMMLRYTDPRRFGAWLWYDSLATASVLAHLGPEPLSEAFSAEYLLEKARGRRTAVKPWLMDNTLVVGVGNIYASESLFSAQIHPDRLAGSLSADEAHLLVQTIKAVLQRSIDQGGTTLRDFLQADGKPGYFAQQLQVYGRAGEACLTCGTTIKRSKHGQRTTFYCPHCQR.

The Schiff-base intermediate with DNA role is filled by proline 2. Glutamate 3 functions as the Proton donor in the catalytic mechanism. Residue lysine 57 is the Proton donor; for beta-elimination activity of the active site. DNA is bound by residues histidine 90, arginine 109, and arginine 150. The segment at 235–269 adopts an FPG-type zinc-finger fold; that stretch reads QVYGRAGEACLTCGTTIKRSKHGQRTTFYCPHCQR. The Proton donor; for delta-elimination activity role is filled by arginine 259.

This sequence belongs to the FPG family. Monomer. Zn(2+) is required as a cofactor.

The catalysed reaction is Hydrolysis of DNA containing ring-opened 7-methylguanine residues, releasing 2,6-diamino-4-hydroxy-5-(N-methyl)formamidopyrimidine.. The enzyme catalyses 2'-deoxyribonucleotide-(2'-deoxyribose 5'-phosphate)-2'-deoxyribonucleotide-DNA = a 3'-end 2'-deoxyribonucleotide-(2,3-dehydro-2,3-deoxyribose 5'-phosphate)-DNA + a 5'-end 5'-phospho-2'-deoxyribonucleoside-DNA + H(+). Involved in base excision repair of DNA damaged by oxidation or by mutagenic agents. Acts as a DNA glycosylase that recognizes and removes damaged bases. Has a preference for oxidized purines, such as 7,8-dihydro-8-oxoguanine (8-oxoG). Has AP (apurinic/apyrimidinic) lyase activity and introduces nicks in the DNA strand. Cleaves the DNA backbone by beta-delta elimination to generate a single-strand break at the site of the removed base with both 3'- and 5'-phosphates. The polypeptide is Formamidopyrimidine-DNA glycosylase (Edwardsiella ictaluri (strain 93-146)).